A 475-amino-acid chain; its full sequence is Bifunctional protein HldE (475 aa).

Residues 1 to 317 (MQYSAQFNRA…ENAIHGRTTA (317 aa)) are ribokinase. 194–197 (NMSE) contacts ATP. Asp263 is an active-site residue. A cytidylyltransferase region spans residues 343–475 (MTNGCFDILH…VIKKIQQLKE (133 aa)).

This sequence in the N-terminal section; belongs to the carbohydrate kinase PfkB family. The protein in the C-terminal section; belongs to the cytidylyltransferase family. As to quaternary structure, homodimer.

The catalysed reaction is D-glycero-beta-D-manno-heptose 7-phosphate + ATP = D-glycero-beta-D-manno-heptose 1,7-bisphosphate + ADP + H(+). It carries out the reaction D-glycero-beta-D-manno-heptose 1-phosphate + ATP + H(+) = ADP-D-glycero-beta-D-manno-heptose + diphosphate. It functions in the pathway nucleotide-sugar biosynthesis; ADP-L-glycero-beta-D-manno-heptose biosynthesis; ADP-L-glycero-beta-D-manno-heptose from D-glycero-beta-D-manno-heptose 7-phosphate: step 1/4. It participates in nucleotide-sugar biosynthesis; ADP-L-glycero-beta-D-manno-heptose biosynthesis; ADP-L-glycero-beta-D-manno-heptose from D-glycero-beta-D-manno-heptose 7-phosphate: step 3/4. In terms of biological role, catalyzes the phosphorylation of D-glycero-D-manno-heptose 7-phosphate at the C-1 position to selectively form D-glycero-beta-D-manno-heptose-1,7-bisphosphate. Catalyzes the ADP transfer from ATP to D-glycero-beta-D-manno-heptose 1-phosphate, yielding ADP-D-glycero-beta-D-manno-heptose. The sequence is that of Bifunctional protein HldE from Histophilus somni (strain 129Pt) (Haemophilus somnus).